The primary structure comprises 751 residues: Catalase-peroxidase 2 (751 aa).

Residues 1–27 form the signal peptide; sequence MFKKTVPLLSAVAIAISFSAGTGVANA. Positions 115–238 form a cross-link, tryptophyl-tyrosyl-methioninium (Trp-Tyr) (with M-264); the sequence is WHGAGTYRVQ…LAAVQMGLIY (124 aa). Residue H116 is the Proton acceptor of the active site. The tryptophyl-tyrosyl-methioninium (Tyr-Met) (with W-115) cross-link spans 238–264; it reads YVNPEGPNGKPDPLLAAKDIRDTFGRM. H279 contacts heme b.

Belongs to the peroxidase family. Peroxidase/catalase subfamily. In terms of assembly, homodimer or homotetramer. Heme b serves as cofactor. Post-translationally, formation of the three residue Trp-Tyr-Met cross-link is important for the catalase, but not the peroxidase activity of the enzyme.

It carries out the reaction H2O2 + AH2 = A + 2 H2O. It catalyses the reaction 2 H2O2 = O2 + 2 H2O. Its function is as follows. Bifunctional enzyme with both catalase and broad-spectrum peroxidase activity. This Idiomarina loihiensis (strain ATCC BAA-735 / DSM 15497 / L2-TR) protein is Catalase-peroxidase 2.